The following is a 159-amino-acid chain: Small ribosomal subunit protein bS16 (159 aa).

The segment covering 102 to 119 (GIPEAAEEAPATESVAEA) has biased composition (low complexity). A disordered region spans residues 102-159 (GIPEAAEEAPATESVAEAEVADVPESELSEAATETAAAELSPPEAEVEKPQVEEAVEA). A compositionally biased stretch (acidic residues) spans 120–129 (EVADVPESEL). The span at 130–145 (SEAATETAAAELSPPE) shows a compositional bias: low complexity.

It belongs to the bacterial ribosomal protein bS16 family.

This is Small ribosomal subunit protein bS16 from Synechococcus sp. (strain JA-2-3B'a(2-13)) (Cyanobacteria bacterium Yellowstone B-Prime).